The sequence spans 206 residues: Holliday junction branch migration complex subunit RuvA (206 aa).

A domain I region spans residues 1–63 (MIASLRGTVI…EDAMKLYGFI (63 aa)). Residues 64–142 (DNESREMFSV…AFAAGVVDEA (79 aa)) are domain II. The interval 143–153 (GEQISLPNANI) is flexible linker. Residues 154 to 206 (ASEVVVEQVSQALVGLGFSEKQSDDAVSFVLAADPSLDTSGALRAALAKLSGK) are domain III.

It belongs to the RuvA family. Homotetramer. Forms an RuvA(8)-RuvB(12)-Holliday junction (HJ) complex. HJ DNA is sandwiched between 2 RuvA tetramers; dsDNA enters through RuvA and exits via RuvB. An RuvB hexamer assembles on each DNA strand where it exits the tetramer. Each RuvB hexamer is contacted by two RuvA subunits (via domain III) on 2 adjacent RuvB subunits; this complex drives branch migration. In the full resolvosome a probable DNA-RuvA(4)-RuvB(12)-RuvC(2) complex forms which resolves the HJ.

It localises to the cytoplasm. The RuvA-RuvB-RuvC complex processes Holliday junction (HJ) DNA during genetic recombination and DNA repair, while the RuvA-RuvB complex plays an important role in the rescue of blocked DNA replication forks via replication fork reversal (RFR). RuvA specifically binds to HJ cruciform DNA, conferring on it an open structure. The RuvB hexamer acts as an ATP-dependent pump, pulling dsDNA into and through the RuvAB complex. HJ branch migration allows RuvC to scan DNA until it finds its consensus sequence, where it cleaves and resolves the cruciform DNA. This Corynebacterium glutamicum (strain R) protein is Holliday junction branch migration complex subunit RuvA.